Reading from the N-terminus, the 154-residue chain is UPF0178 protein BAV3236 (154 aa).

The protein belongs to the UPF0178 family.

The protein is UPF0178 protein BAV3236 of Bordetella avium (strain 197N).